A 294-amino-acid chain; its full sequence is Proteasome subunit beta (294 aa).

The propeptide at 1-65 is removed in mature form; by autocatalysis; the sequence is MTADRPALRT…MESGDLAPHG (65 aa). Residue Thr-66 is the Nucleophile of the active site.

Belongs to the peptidase T1B family. In terms of assembly, the 20S proteasome core is composed of 14 alpha and 14 beta subunits that assemble into four stacked heptameric rings, resulting in a barrel-shaped structure. The two inner rings, each composed of seven catalytic beta subunits, are sandwiched by two outer rings, each composed of seven alpha subunits. The catalytic chamber with the active sites is on the inside of the barrel. Has a gated structure, the ends of the cylinder being occluded by the N-termini of the alpha-subunits. Is capped by the proteasome-associated ATPase, ARC.

It localises to the cytoplasm. It carries out the reaction Cleavage of peptide bonds with very broad specificity.. The protein operates within protein degradation; proteasomal Pup-dependent pathway. With respect to regulation, the formation of the proteasomal ATPase ARC-20S proteasome complex, likely via the docking of the C-termini of ARC into the intersubunit pockets in the alpha-rings, may trigger opening of the gate for substrate entry. Interconversion between the open-gate and close-gate conformations leads to a dynamic regulation of the 20S proteasome proteolysis activity. In terms of biological role, component of the proteasome core, a large protease complex with broad specificity involved in protein degradation. This is Proteasome subunit beta from Rhodococcus jostii (strain RHA1).